Here is a 595-residue protein sequence, read N- to C-terminus: Isoprene synthase, chloroplastic (595 aa).

Residues 1 to 37 (MATELLCLHRPISLTHKLFRNPLPKVIQATPLTLKLR) constitute a chloroplast transit peptide. Residue Asp345 coordinates dimethylallyl diphosphate. 2 residues coordinate Mg(2+): Asp345 and Asp349. The DDXXD motif motif lies at 345–349 (DDIYD). 3 residues coordinate dimethylallyl diphosphate: Glu423, Arg486, and Asn489. Asn489, Ser493, and Glu497 together coordinate Mg(2+).

It belongs to the terpene synthase family. Tpsb subfamily. Requires Mg(2+) as cofactor. Predominantly expressed in leaves.

Its subcellular location is the plastid. It is found in the chloroplast. The enzyme catalyses dimethylallyl diphosphate = isoprene + diphosphate. The protein operates within terpene metabolism. Its function is as follows. Lyase that catalyzes the formation of isoprene from dimethylallyl diphosphate, but not from isopentenyl diphosphate or geranyl diphosphate. The chain is Isoprene synthase, chloroplastic from Populus alba (White poplar).